The sequence spans 689 residues: Glycine--tRNA ligase beta subunit (689 aa).

Belongs to the class-II aminoacyl-tRNA synthetase family. In terms of assembly, tetramer of two alpha and two beta subunits.

The protein resides in the cytoplasm. The catalysed reaction is tRNA(Gly) + glycine + ATP = glycyl-tRNA(Gly) + AMP + diphosphate. This is Glycine--tRNA ligase beta subunit from Dictyoglomus thermophilum (strain ATCC 35947 / DSM 3960 / H-6-12).